A 396-amino-acid polypeptide reads, in one-letter code: Carbamoyl phosphate synthase small chain (396 aa).

Residues 1–204 are CPSase; sequence MTQHDNDPAW…WDKGFGQQDK (204 aa). L-glutamine contacts are provided by serine 59, glycine 256, and glycine 258. The Glutamine amidotransferase type-1 domain maps to 208 to 396; sequence NVVAIDYGIK…AELMRQKKSA (189 aa). Cysteine 285 serves as the catalytic Nucleophile. L-glutamine is bound by residues leucine 286, glutamine 289, asparagine 327, glycine 329, and phenylalanine 330. Residues histidine 369 and glutamate 371 contribute to the active site.

It belongs to the CarA family. In terms of assembly, composed of two chains; the small (or glutamine) chain promotes the hydrolysis of glutamine to ammonia, which is used by the large (or ammonia) chain to synthesize carbamoyl phosphate. Tetramer of heterodimers (alpha,beta)4.

It carries out the reaction hydrogencarbonate + L-glutamine + 2 ATP + H2O = carbamoyl phosphate + L-glutamate + 2 ADP + phosphate + 2 H(+). The enzyme catalyses L-glutamine + H2O = L-glutamate + NH4(+). Its pathway is amino-acid biosynthesis; L-arginine biosynthesis; carbamoyl phosphate from bicarbonate: step 1/1. The protein operates within pyrimidine metabolism; UMP biosynthesis via de novo pathway; (S)-dihydroorotate from bicarbonate: step 1/3. In terms of biological role, small subunit of the glutamine-dependent carbamoyl phosphate synthetase (CPSase). CPSase catalyzes the formation of carbamoyl phosphate from the ammonia moiety of glutamine, carbonate, and phosphate donated by ATP, constituting the first step of 2 biosynthetic pathways, one leading to arginine and/or urea and the other to pyrimidine nucleotides. The small subunit (glutamine amidotransferase) binds and cleaves glutamine to supply the large subunit with the substrate ammonia. This is Carbamoyl phosphate synthase small chain from Bradyrhizobium diazoefficiens (strain JCM 10833 / BCRC 13528 / IAM 13628 / NBRC 14792 / USDA 110).